A 362-amino-acid polypeptide reads, in one-letter code: Probable endopolygalacturonase B (362 aa).

A signal peptide spans 1–20 (MHFLQNAVVAATMGAALAAA). A propeptide spanning residues 21 to 25 (APLEK) is cleaved from the precursor. C28 and C43 are disulfide-bonded. PbH1 repeat units follow at residues 155–184 (ADHLTITDVTIDNSAGTSKGHNTDAFDIGQ), 185–206 (STYITIDGATVYNQDDCLAINS), 207–227 (GEHITFTNGYCDGGHGLSIGS), 236–257 (VNDVTISNSKVLNSQNGVRIKT), 265–287 (VENVKFEDITLSDISKYGIVVEQ), and 299–344 (TNGV…DVTG). D199 (proton donor) is an active-site residue. A disulfide bridge connects residues C201 and C217. H221 is a catalytic residue. A disulfide bridge links C327 with C332. An N-linked (GlcNAc...) asparagine glycan is attached at N334. A disulfide bridge connects residues C351 and C360.

Belongs to the glycosyl hydrolase 28 family.

It localises to the secreted. It carries out the reaction (1,4-alpha-D-galacturonosyl)n+m + H2O = (1,4-alpha-D-galacturonosyl)n + (1,4-alpha-D-galacturonosyl)m.. In terms of biological role, involved in maceration and soft-rotting of plant tissue. Hydrolyzes the 1,4-alpha glycosidic bonds of de-esterified pectate in the smooth region of the plant cell wall. The chain is Probable endopolygalacturonase B (pgaB) from Aspergillus niger (strain ATCC MYA-4892 / CBS 513.88 / FGSC A1513).